A 477-amino-acid polypeptide reads, in one-letter code: Asparaginyl-tRNA synthetase (477 aa).

The transit peptide at 1-14 directs the protein to the mitochondrion; it reads MLGARRLLGALRLC. Lysine 353 carries the post-translational modification N6-acetyllysine.

This sequence belongs to the class-II aminoacyl-tRNA synthetase family. Homodimer. As to expression, expressed in brain and inner ear, including the cochlear epithelium and organ of Corti.

The protein localises to the mitochondrion matrix. It localises to the mitochondrion. It catalyses the reaction tRNA(Asn) + L-asparagine + ATP = L-asparaginyl-tRNA(Asn) + AMP + diphosphate + H(+). Its function is as follows. Mitochondrial aminoacyl-tRNA synthetase that catalyzes the specific attachment of the asparagine amino acid (aa) to the homologous transfer RNA (tRNA), further participating in protein synthesis. The reaction occurs in a two steps: asparagine is first activated by ATP to form Asn-AMP and then transferred to the acceptor end of tRNA(Asn). In Mus musculus (Mouse), this protein is Asparaginyl-tRNA synthetase.